The following is an 857-amino-acid chain: RNA-directed RNA polymerase 2a (857 aa).

A RdRp catalytic domain is found at 511–624 (KHCLEIDLSK…FSVLPPVGDP (114 aa)). Residues 772–857 (TKQRKKKDGI…PCEHGGIIRI (86 aa)) form a disordered region. Residues 800–812 (EKTETKVSHEEST) show a composition bias toward basic and acidic residues.

It belongs to the ssRNA positive-strand viruses RNA-directed RNA polymerase family. As to quaternary structure, interacts with replication protein 1a.

The catalysed reaction is RNA(n) + a ribonucleoside 5'-triphosphate = RNA(n+1) + diphosphate. RNA-dependent RNA polymerase which replicates the viral genome composed of 3 RNA segments, RNA1, RNA2 and RNA3. The sequence is that of RNA-directed RNA polymerase 2a from Cucumis sativus (Cucumber).